Reading from the N-terminus, the 620-residue chain is Toxin coregulated pilus biosynthesis protein I (620 aa).

The region spanning 344-580 (TMNDLSIKQT…DVAKQMEDIR (237 aa)) is the Methyl-accepting transducer domain.

It belongs to the methyl-accepting chemotaxis (MCP) protein family.

Its subcellular location is the cell inner membrane. May function as an environmental regulator of TCP biogenesis. Negatively regulates the synthesis of the major pilin subunit of TCP (TcpA). In Vibrio cholerae serotype O1 (strain ATCC 39315 / El Tor Inaba N16961), this protein is Toxin coregulated pilus biosynthesis protein I (tcpI).